We begin with the raw amino-acid sequence, 142 residues long: MAKEITKIIKLQINAGAANPSPPVGPALGQAGVNIMAFCKEFNAATQKQAGDLLPTVITVYKDKSFSFITKQPPGSVLLKKAAGVASGSGEPNKKKVATLSKAKLMEVVNTKLPDLNTKDPERAARILAGQARQMGIEVEGM.

This sequence belongs to the universal ribosomal protein uL11 family. In terms of assembly, part of the ribosomal stalk of the 50S ribosomal subunit. Interacts with L10 and the large rRNA to form the base of the stalk. L10 forms an elongated spine to which L12 dimers bind in a sequential fashion forming a multimeric L10(L12)X complex. One or more lysine residues are methylated.

Functionally, forms part of the ribosomal stalk which helps the ribosome interact with GTP-bound translation factors. The sequence is that of Large ribosomal subunit protein uL11 from Akkermansia muciniphila (strain ATCC BAA-835 / DSM 22959 / JCM 33894 / BCRC 81048 / CCUG 64013 / CIP 107961 / Muc).